The following is a 206-amino-acid chain: Ribosomal RNA small subunit methyltransferase G (206 aa).

Residues glycine 74, leucine 79, 125-126 (VE), and arginine 140 each bind S-adenosyl-L-methionine.

The protein belongs to the methyltransferase superfamily. RNA methyltransferase RsmG family.

The protein localises to the cytoplasm. It carries out the reaction guanosine(527) in 16S rRNA + S-adenosyl-L-methionine = N(7)-methylguanosine(527) in 16S rRNA + S-adenosyl-L-homocysteine. In terms of biological role, specifically methylates the N7 position of guanine in position 527 of 16S rRNA. The chain is Ribosomal RNA small subunit methyltransferase G from Shewanella putrefaciens (strain CN-32 / ATCC BAA-453).